Consider the following 733-residue polypeptide: Protein psiM (733 aa).

The first 26 residues, 1 to 26 (MKKINNNKIFVLFLTILLYLLNITTA), serve as a signal peptide directing secretion. Residues N22, N65, and N96 are each glycosylated (N-linked (GlcNAc...) asparagine). The Extracellular segment spans residues 27–672 (QKPVSINIKI…VCQKAALVST (646 aa)). Residues 114–260 (NYDSDSGNYI…YDYCGVCNGD (147 aa)) form the PA14 domain. Residues N277, N336, N379, N428, N471, N537, N573, and N641 are each glycosylated (N-linked (GlcNAc...) asparagine). The helical transmembrane segment at 673-693 (AVIASVVVVGAVVLGAAIFAG) threads the bilayer. Topologically, residues 694 to 733 (KKGYDAWKTSQGNVMAASQANPLYTQSSNGGENPLYNSPT) are cytoplasmic.

This sequence belongs to the prespore-cell-inducing factor family.

It is found in the membrane. This is Protein psiM (psiM) from Dictyostelium discoideum (Social amoeba).